Reading from the N-terminus, the 485-residue chain is NADH-quinone oxidoreductase subunit N (485 aa).

Helical transmembrane passes span 10 to 30 (ILPEILLALGVIVVMFSGLFL), 40 to 60 (IFFQVFTLLALIATFAKEYLI), 71 to 91 (VVFSGFAYTLQLVILVLAVFV), 107 to 127 (GDFYTLLMLCVLGAMVLTAAH), 129 to 149 (LVTIYVGLELLSLPMYALIAI), 164 to 184 (FVLGAIASALLLFGMSFVYGM), 209 to 229 (FLLVYLVMMIATFLFKLGAFP), 248 to 268 (IVATIPKVAAFAMLVNILFVG), 276 to 296 (WIYLFRIIGILSIFFGSLVAL), 304 to 324 (LLGYSTVSQIGFVLLATTLNP), 336 to 356 (VIVYLFTTLAVFGVLTTISVG), 377 to 397 (AFILLIVLFSMAGIPPFGGFI), 410 to 430 (GNYFLACFVLFMAVIASFYYV), and 454 to 474 (LIALSINGLVLLFLGIMPMLL).

It belongs to the complex I subunit 2 family. In terms of assembly, NDH-1 is composed of 14 different subunits. Subunits NuoA, H, J, K, L, M, N constitute the membrane sector of the complex.

It localises to the cell inner membrane. It catalyses the reaction a quinone + NADH + 5 H(+)(in) = a quinol + NAD(+) + 4 H(+)(out). NDH-1 shuttles electrons from NADH, via FMN and iron-sulfur (Fe-S) centers, to quinones in the respiratory chain. The immediate electron acceptor for the enzyme in this species is believed to be ubiquinone. Couples the redox reaction to proton translocation (for every two electrons transferred, four hydrogen ions are translocated across the cytoplasmic membrane), and thus conserves the redox energy in a proton gradient. This chain is NADH-quinone oxidoreductase subunit N, found in Francisella tularensis subsp. holarctica (strain FTNF002-00 / FTA).